A 100-amino-acid chain; its full sequence is Urease subunit gamma (100 aa).

It belongs to the urease gamma subunit family. As to quaternary structure, heterotrimer of UreA (gamma), UreB (beta) and UreC (alpha) subunits. Three heterotrimers associate to form the active enzyme.

It is found in the cytoplasm. It carries out the reaction urea + 2 H2O + H(+) = hydrogencarbonate + 2 NH4(+). It functions in the pathway nitrogen metabolism; urea degradation; CO(2) and NH(3) from urea (urease route): step 1/1. This chain is Urease subunit gamma, found in Edwardsiella ictaluri (strain 93-146).